Consider the following 447-residue polypeptide: Trigger factor (447 aa).

In terms of domain architecture, PPIase FKBP-type spans 164–249; sequence GDLVVIDFIG…VKEVKQAVVP (86 aa).

The protein belongs to the FKBP-type PPIase family. Tig subfamily.

It is found in the cytoplasm. It carries out the reaction [protein]-peptidylproline (omega=180) = [protein]-peptidylproline (omega=0). In terms of biological role, involved in protein export. Acts as a chaperone by maintaining the newly synthesized protein in an open conformation. Functions as a peptidyl-prolyl cis-trans isomerase. The polypeptide is Trigger factor (Rhodospirillum rubrum (strain ATCC 11170 / ATH 1.1.1 / DSM 467 / LMG 4362 / NCIMB 8255 / S1)).